We begin with the raw amino-acid sequence, 418 residues long: UDP-N-acetylglucosamine 1-carboxyvinyltransferase (418 aa).

22-23 (KN) lines the phosphoenolpyruvate pocket. Residue Arg92 coordinates UDP-N-acetyl-alpha-D-glucosamine. Cys116 functions as the Proton donor in the catalytic mechanism. The residue at position 116 (Cys116) is a 2-(S-cysteinyl)pyruvic acid O-phosphothioketal. Residues Asp305 and Val327 each contribute to the UDP-N-acetyl-alpha-D-glucosamine site.

The protein belongs to the EPSP synthase family. MurA subfamily.

It localises to the cytoplasm. It carries out the reaction phosphoenolpyruvate + UDP-N-acetyl-alpha-D-glucosamine = UDP-N-acetyl-3-O-(1-carboxyvinyl)-alpha-D-glucosamine + phosphate. Its pathway is cell wall biogenesis; peptidoglycan biosynthesis. Its function is as follows. Cell wall formation. Adds enolpyruvyl to UDP-N-acetylglucosamine. The protein is UDP-N-acetylglucosamine 1-carboxyvinyltransferase of Endomicrobium trichonymphae.